Here is a 309-residue protein sequence, read N- to C-terminus: Aspartate carbamoyltransferase catalytic subunit (309 aa).

Residues Arg-55 and Thr-56 each coordinate carbamoyl phosphate. Lys-85 contacts L-aspartate. The carbamoyl phosphate site is built by Arg-106, His-135, and Gln-138. 2 residues coordinate L-aspartate: Arg-168 and Arg-230. 2 residues coordinate carbamoyl phosphate: Leu-268 and Pro-269.

Belongs to the aspartate/ornithine carbamoyltransferase superfamily. ATCase family. As to quaternary structure, heterododecamer (2C3:3R2) of six catalytic PyrB chains organized as two trimers (C3), and six regulatory PyrI chains organized as three dimers (R2).

The catalysed reaction is carbamoyl phosphate + L-aspartate = N-carbamoyl-L-aspartate + phosphate + H(+). Its pathway is pyrimidine metabolism; UMP biosynthesis via de novo pathway; (S)-dihydroorotate from bicarbonate: step 2/3. Catalyzes the condensation of carbamoyl phosphate and aspartate to form carbamoyl aspartate and inorganic phosphate, the committed step in the de novo pyrimidine nucleotide biosynthesis pathway. The chain is Aspartate carbamoyltransferase catalytic subunit from Aliivibrio salmonicida (strain LFI1238) (Vibrio salmonicida (strain LFI1238)).